Consider the following 567-residue polypeptide: Proline--tRNA ligase (567 aa).

Belongs to the class-II aminoacyl-tRNA synthetase family. ProS type 1 subfamily. As to quaternary structure, homodimer.

It localises to the cytoplasm. The catalysed reaction is tRNA(Pro) + L-proline + ATP = L-prolyl-tRNA(Pro) + AMP + diphosphate. Catalyzes the attachment of proline to tRNA(Pro) in a two-step reaction: proline is first activated by ATP to form Pro-AMP and then transferred to the acceptor end of tRNA(Pro). As ProRS can inadvertently accommodate and process non-cognate amino acids such as alanine and cysteine, to avoid such errors it has two additional distinct editing activities against alanine. One activity is designated as 'pretransfer' editing and involves the tRNA(Pro)-independent hydrolysis of activated Ala-AMP. The other activity is designated 'posttransfer' editing and involves deacylation of mischarged Ala-tRNA(Pro). The misacylated Cys-tRNA(Pro) is not edited by ProRS. This chain is Proline--tRNA ligase, found in Stenotrophomonas maltophilia (strain K279a).